We begin with the raw amino-acid sequence, 550 residues long: Chaperonin GroEL (550 aa).

ATP-binding positions include 30 to 33 (TLGP), lysine 51, 87 to 91 (DGTTT), glycine 415, and aspartate 497.

Belongs to the chaperonin (HSP60) family. As to quaternary structure, forms a cylinder of 14 subunits composed of two heptameric rings stacked back-to-back. Interacts with the co-chaperonin GroES.

Its subcellular location is the cytoplasm. The enzyme catalyses ATP + H2O + a folded polypeptide = ADP + phosphate + an unfolded polypeptide.. In terms of biological role, together with its co-chaperonin GroES, plays an essential role in assisting protein folding. The GroEL-GroES system forms a nano-cage that allows encapsulation of the non-native substrate proteins and provides a physical environment optimized to promote and accelerate protein folding. This is Chaperonin GroEL from Yersinia enterocolitica serotype O:8 / biotype 1B (strain NCTC 13174 / 8081).